The primary structure comprises 306 residues: N(1)-aminopropylagmatine ureohydrolase (306 aa).

Residues histidine 121, aspartate 145, histidine 147, aspartate 149, aspartate 228, and aspartate 230 each coordinate Mn(2+).

This sequence belongs to the arginase family. Requires Mn(2+) as cofactor.

It carries out the reaction N(1)-(3-aminopropyl)agmatine + H2O = urea + spermidine. It functions in the pathway amine and polyamine biosynthesis; spermidine biosynthesis. Its function is as follows. Ureohydrolase involved in the biosynthesis of spermidine via the carboxyaminopropylagmatine (CAPA) pathway. Catalyzes the conversion of aminopropylagmatine (APA) to spermidine and urea. Is highly specific to APA and incapable of releasing measurable urea from CAPA, agmatine, arginine, guanidine, guanidinobutyrate and guanidinopropionate. The protein is N(1)-aminopropylagmatine ureohydrolase of Synechocystis sp. (strain ATCC 27184 / PCC 6803 / Kazusa).